The sequence spans 360 residues: Histidinol-phosphate aminotransferase (360 aa).

Lys213 bears the N6-(pyridoxal phosphate)lysine mark.

Belongs to the class-II pyridoxal-phosphate-dependent aminotransferase family. Histidinol-phosphate aminotransferase subfamily. As to quaternary structure, homodimer. Pyridoxal 5'-phosphate serves as cofactor.

It catalyses the reaction L-histidinol phosphate + 2-oxoglutarate = 3-(imidazol-4-yl)-2-oxopropyl phosphate + L-glutamate. It participates in amino-acid biosynthesis; L-histidine biosynthesis; L-histidine from 5-phospho-alpha-D-ribose 1-diphosphate: step 7/9. In Baumannia cicadellinicola subsp. Homalodisca coagulata, this protein is Histidinol-phosphate aminotransferase.